Reading from the N-terminus, the 339-residue chain is tRNA(Ile)-lysidine synthase (339 aa).

34–39 (SGGPDS) lines the ATP pocket.

The protein belongs to the tRNA(Ile)-lysidine synthase family.

The protein resides in the cytoplasm. It carries out the reaction cytidine(34) in tRNA(Ile2) + L-lysine + ATP = lysidine(34) in tRNA(Ile2) + AMP + diphosphate + H(+). Functionally, ligates lysine onto the cytidine present at position 34 of the AUA codon-specific tRNA(Ile) that contains the anticodon CAU, in an ATP-dependent manner. Cytidine is converted to lysidine, thus changing the amino acid specificity of the tRNA from methionine to isoleucine. The chain is tRNA(Ile)-lysidine synthase from Methylobacterium nodulans (strain LMG 21967 / CNCM I-2342 / ORS 2060).